Reading from the N-terminus, the 363-residue chain is DNA replication and repair protein RecF (363 aa).

Residue 30-37 participates in ATP binding; sequence GDNAQGKT.

The protein belongs to the RecF family.

It localises to the cytoplasm. Functionally, the RecF protein is involved in DNA metabolism; it is required for DNA replication and normal SOS inducibility. RecF binds preferentially to single-stranded, linear DNA. It also seems to bind ATP. This chain is DNA replication and repair protein RecF, found in Lachnospira eligens (strain ATCC 27750 / DSM 3376 / VPI C15-48 / C15-B4) (Eubacterium eligens).